The primary structure comprises 842 residues: Protein P (842 aa).

The interval 1–177 (MPLSYQHFRR…FCGSPYSWEQ (177 aa)) is terminal protein domain (TP). Residues 178 to 345 (ELHHGAFLDG…YCLTHLVNLL (168 aa)) are spacer. The disordered stretch occupies residues 186–273 (DGPSRMGEES…AKNIASRSAS (88 aa)). Residues 223 to 239 (GPQSQQRPLDGSQQGRS) are compositionally biased toward polar residues. The polymerase/reverse transcriptase domain (RT) stretch occupies residues 346–689 (EDWGPCTEHG…YLNLYPVARQ (344 aa)). Positions 356–599 (KHHIRIPRTP…YSLNFMGYVI (244 aa)) constitute a Reverse transcriptase domain. Asp-428, Asp-550, and Asp-551 together coordinate Mg(2+).

This sequence belongs to the hepadnaviridae P protein family.

The catalysed reaction is DNA(n) + a 2'-deoxyribonucleoside 5'-triphosphate = DNA(n+1) + diphosphate. It carries out the reaction Endonucleolytic cleavage to 5'-phosphomonoester.. Activated by host HSP70 and HSP40 in vitro to be able to bind the epsilon loop of the pgRNA. Because deletion of the RNase H region renders the protein partly chaperone-independent, the chaperones may be needed indirectly to relieve occlusion of the RNA-binding site by this domain. Inhibited by several reverse-transcriptase inhibitors: Lamivudine, Adefovir and Entecavir. Its function is as follows. Multifunctional enzyme that converts the viral RNA genome into dsDNA in viral cytoplasmic capsids. This enzyme displays a DNA polymerase activity that can copy either DNA or RNA templates, and a ribonuclease H (RNase H) activity that cleaves the RNA strand of RNA-DNA heteroduplexes in a partially processive 3'- to 5'-endonucleasic mode. Neo-synthesized pregenomic RNA (pgRNA) are encapsidated together with the P protein, and reverse-transcribed inside the nucleocapsid. Initiation of reverse-transcription occurs first by binding the epsilon loop on the pgRNA genome, and is initiated by protein priming, thereby the 5'-end of (-)DNA is covalently linked to P protein. Partial (+)DNA is synthesized from the (-)DNA template and generates the relaxed circular DNA (RC-DNA) genome. After budding and infection, the RC-DNA migrates in the nucleus, and is converted into a plasmid-like covalently closed circular DNA (cccDNA). The activity of P protein does not seem to be necessary for cccDNA generation, and is presumably released from (+)DNA by host nuclear DNA repair machinery. The protein is Protein P of Homo sapiens (Human).